The primary structure comprises 385 residues: Putative glutamate--cysteine ligase 2 (385 aa).

The protein belongs to the glutamate--cysteine ligase type 2 family. YbdK subfamily.

It catalyses the reaction L-cysteine + L-glutamate + ATP = gamma-L-glutamyl-L-cysteine + ADP + phosphate + H(+). Its function is as follows. ATP-dependent carboxylate-amine ligase which exhibits weak glutamate--cysteine ligase activity. The polypeptide is Putative glutamate--cysteine ligase 2 (Solibacter usitatus (strain Ellin6076)).